The primary structure comprises 1204 residues: ATP-dependent helicase/nuclease subunit A (1204 aa).

A UvrD-like helicase ATP-binding domain is found at 2 to 472; sequence PQFTKEQEKA…ILLSDNFRST (471 aa). An ATP-binding site is contributed by 23-30; sequence ASAGSGKT. The 284-residue stretch at 500-783 folds into the UvrD-like helicase C-terminal domain; sequence GQLIFGAKYY…RLMTIHGSKG (284 aa).

Belongs to the helicase family. AddA subfamily. Heterodimer of AddA and AddB/RexB. The cofactor is Mg(2+).

It carries out the reaction Couples ATP hydrolysis with the unwinding of duplex DNA by translocating in the 3'-5' direction.. The catalysed reaction is ATP + H2O = ADP + phosphate + H(+). In terms of biological role, the heterodimer acts as both an ATP-dependent DNA helicase and an ATP-dependent, dual-direction single-stranded exonuclease. Recognizes the chi site generating a DNA molecule suitable for the initiation of homologous recombination. The AddA nuclease domain is required for chi fragment generation; this subunit has the helicase and 3' -&gt; 5' nuclease activities. The sequence is that of ATP-dependent helicase/nuclease subunit A from Lactobacillus helveticus (strain DPC 4571).